The chain runs to 562 residues: NAD-dependent malic enzyme (562 aa).

Tyr101 (proton donor) is an active-site residue. Position 154 (Arg154) interacts with NAD(+). The active-site Proton acceptor is the Lys172. Glu243, Asp244, and Asp267 together coordinate a divalent metal cation. 2 residues coordinate NAD(+): Asp267 and Asn415.

This sequence belongs to the malic enzymes family. Homotetramer. It depends on Mg(2+) as a cofactor. The cofactor is Mn(2+).

The catalysed reaction is (S)-malate + NAD(+) = pyruvate + CO2 + NADH. It carries out the reaction oxaloacetate + H(+) = pyruvate + CO2. This chain is NAD-dependent malic enzyme, found in Shewanella woodyi (strain ATCC 51908 / MS32).